The chain runs to 155 residues: Cyanate hydratase (155 aa).

Active-site residues include Arg-92, Glu-95, and Ser-118.

Belongs to the cyanase family.

It catalyses the reaction cyanate + hydrogencarbonate + 3 H(+) = NH4(+) + 2 CO2. Its function is as follows. Catalyzes the reaction of cyanate with bicarbonate to produce ammonia and carbon dioxide. The protein is Cyanate hydratase of Mycobacterium avium (strain 104).